Consider the following 352-residue polypeptide: MTIAVGRAPAERGWFDVLDDWLKRDRFVFVGWSGLLLFPCAYLALGGWLTGTSFVTSWYTHGIASSYLEGGNFLTVAVSTPADAFGHSLMLLWGPEAQGNFVRWCQLGGLWNFVALHGAFGLIGFMLRQFEIARLVGVRPYNAIAFSGPIAVFVSVFLMYPLGQSSWFFAPSFGVAAIFRFLLFLQGFHNWTLNPFHMMGVAGILGGALLCAIHGATVENTLFEDSEQSNTFRAFEPTQAEETYSMVTANRFWSQIFGIAFSNKRWLHFFMLFVPVTGLWMSSIGIVGLALNLRAYDFVSQELRAAEDPEFETFYTKNILLNEGIRAWMAPQDQPHEKFVFPEEVLPRGNAL.

A helical transmembrane segment spans residues 40–60 (CAYLALGGWLTGTSFVTSWYT). His117 contacts chlorophyll a. The chain crosses the membrane as a helical span at residues 124-140 (GFMLRQFEIARLVGVRP). Residues Gln129 and Asn142 each coordinate pheophytin a. Residues 152 to 165 (VFVSVFLMYPLGQS) traverse the membrane as a helical segment. His197 provides a ligand contact to chlorophyll a. Residues 207-227 (GALLCAIHGATVENTLFEDSE) form a helical membrane-spanning segment. The a plastoquinone site is built by His214 and Phe261. His214 lines the Fe cation pocket. Residue His268 coordinates Fe cation. Residues 278–294 (GLWMSSIGIVGLALNLR) form a helical membrane-spanning segment.

The protein belongs to the reaction center PufL/M/PsbA/D family. In terms of assembly, PSII is composed of 1 copy each of membrane proteins PsbA, PsbB, PsbC, PsbD, PsbE, PsbF, PsbH, PsbI, PsbJ, PsbK, PsbL, PsbM, PsbT, PsbX, PsbY, PsbZ, Psb30/Ycf12, peripheral proteins PsbO, CyanoQ (PsbQ), PsbU, PsbV and a large number of cofactors. It forms dimeric complexes. The D1/D2 heterodimer binds P680, chlorophylls that are the primary electron donor of PSII, and subsequent electron acceptors. It shares a non-heme iron and each subunit binds pheophytin, quinone, additional chlorophylls, carotenoids and lipids. There is also a Cl(-1) ion associated with D1 and D2, which is required for oxygen evolution. The PSII complex binds additional chlorophylls, carotenoids and specific lipids. is required as a cofactor.

It is found in the cellular thylakoid membrane. It catalyses the reaction 2 a plastoquinone + 4 hnu + 2 H2O = 2 a plastoquinol + O2. Its function is as follows. Photosystem II (PSII) is a light-driven water:plastoquinone oxidoreductase that uses light energy to abstract electrons from H(2)O, generating O(2) and a proton gradient subsequently used for ATP formation. It consists of a core antenna complex that captures photons, and an electron transfer chain that converts photonic excitation into a charge separation. The D1/D2 (PsbA/PsbD) reaction center heterodimer binds P680, the primary electron donor of PSII as well as several subsequent electron acceptors. D2 is needed for assembly of a stable PSII complex. This Synechococcus elongatus (strain ATCC 33912 / PCC 7942 / FACHB-805) (Anacystis nidulans R2) protein is Photosystem II D2 protein.